A 317-amino-acid polypeptide reads, in one-letter code: Tetraspanin-15 (317 aa).

A disordered region spans residues 1–43 (MADNAQVVPVEEPAATATATATATATTEPEAKSSDQMESQSDN). The Cytoplasmic segment spans residues 1-60 (MADNAQVVPVEEPAATATATATATATTEPEAKSSDQMESQSDNKPPMGTLMALVNILAAG). Over residues 7 to 28 (VVPVEEPAATATATATATATTE) the composition is skewed to low complexity. Residues 61–81 (VLPIFTFVLSLTLLGYAVWLL) traverse the membrane as a helical segment. The Extracellular portion of the chain corresponds to 82 to 96 (YMRSYDCEDILGLPR). A helical membrane pass occupies residues 97-117 (VQTLASVGLLAVFVVSNAALF). Over 118–126 (LRRKFPMPA) the chain is Cytoplasmic. Residues 127–147 (LVVMVVVLLLMLFIGLAYAGV) form a helical membrane-spanning segment. At 148–287 (NEMQSRRFPA…IRSVRRKWWQ (140 aa)) the chain is on the extracellular side. A glycan (N-linked (GlcNAc...) asparagine) is linked at N224. Residues 288–308 (LGIFLIVISILLLMSHLLIFL) form a helical membrane-spanning segment. Residues 309–317 (ATFWERFKG) are Cytoplasmic-facing.

This sequence belongs to the tetraspanin (TM4SF) family.

It is found in the membrane. Its function is as follows. May be involved in the regulation of cell differentiation. The polypeptide is Tetraspanin-15 (TET15) (Arabidopsis thaliana (Mouse-ear cress)).